A 328-amino-acid polypeptide reads, in one-letter code: Biotin synthase (328 aa).

The Radical SAM core domain maps to 41–260 (TAIETASLLS…VALARILMPA (220 aa)). 3 residues coordinate [4Fe-4S] cluster: Cys56, Cys60, and Cys63. Residues Cys100, Cys131, Cys191, and Arg264 each contribute to the [2Fe-2S] cluster site.

Belongs to the radical SAM superfamily. Biotin synthase family. Homodimer. Requires [4Fe-4S] cluster as cofactor. [2Fe-2S] cluster serves as cofactor.

It catalyses the reaction (4R,5S)-dethiobiotin + (sulfur carrier)-SH + 2 reduced [2Fe-2S]-[ferredoxin] + 2 S-adenosyl-L-methionine = (sulfur carrier)-H + biotin + 2 5'-deoxyadenosine + 2 L-methionine + 2 oxidized [2Fe-2S]-[ferredoxin]. The protein operates within cofactor biosynthesis; biotin biosynthesis; biotin from 7,8-diaminononanoate: step 2/2. Catalyzes the conversion of dethiobiotin (DTB) to biotin by the insertion of a sulfur atom into dethiobiotin via a radical-based mechanism. This chain is Biotin synthase, found in Cereibacter sphaeroides (strain ATCC 17029 / ATH 2.4.9) (Rhodobacter sphaeroides).